Here is a 167-residue protein sequence, read N- to C-terminus: Endoribonuclease YbeY (167 aa).

The Zn(2+) site is built by H125, H129, and H135.

The protein belongs to the endoribonuclease YbeY family. Zn(2+) serves as cofactor.

The protein localises to the cytoplasm. Single strand-specific metallo-endoribonuclease involved in late-stage 70S ribosome quality control and in maturation of the 3' terminus of the 16S rRNA. The polypeptide is Endoribonuclease YbeY (Allorhizobium ampelinum (strain ATCC BAA-846 / DSM 112012 / S4) (Agrobacterium vitis (strain S4))).